Consider the following 522-residue polypeptide: BTB/POZ domain-containing protein 16 (522 aa).

A BTB domain is found at 166–222 (INDPAVTRVAFALALKNLYMKEVEMTVDNVLGVLASAHILQFNRLFQKCVNMMMNRL).

The chain is BTB/POZ domain-containing protein 16 (Btbd16) from Mus musculus (Mouse).